We begin with the raw amino-acid sequence, 316 residues long: uncharacterized protein (316 aa).

A helical transmembrane segment spans residues 12 to 34 (RWVCLTSVILFCFCIAVMRYGGV).

It localises to the membrane. This is an uncharacterized protein from Treponema pallidum (strain Nichols).